Consider the following 36-residue polypeptide: Photosystem I reaction center subunit VIII (36 aa).

The helical transmembrane segment at 9 to 29 (ILVPLVGLVFPAIAMASLFLY) threads the bilayer.

This sequence belongs to the PsaI family.

Its subcellular location is the plastid. It localises to the chloroplast thylakoid membrane. Functionally, may help in the organization of the PsaL subunit. This Oltmannsiellopsis viridis (Marine flagellate) protein is Photosystem I reaction center subunit VIII.